The primary structure comprises 161 residues: uncharacterized protein (161 aa).

This is an uncharacterized protein from Archaeoglobus fulgidus (strain ATCC 49558 / DSM 4304 / JCM 9628 / NBRC 100126 / VC-16).